A 1547-amino-acid chain; its full sequence is DNA topoisomerase 2 (1547 aa).

The segment at 8–30 (FNKMSSPKQNGTGEPAPAKGQKG) is disordered. Residues 9–19 (NKMSSPKQNGT) show a composition bias toward polar residues. ATP is bound by residues N99, N128, 156-158 (SSN), and 169-176 (GRNGYGAK). The interaction with DNA stretch occupies residues 351 to 353 (KKK). 385-387 (QTK) is an ATP binding site. Residues 463–580 (CTLILTEGDS…ELLKLPFLEE (118 aa)) enclose the Toprim domain. The Mg(2+) site is built by E469, D549, and D551. In terms of domain architecture, Topo IIA-type catalytic spans 723-1192 (IPSMIDGLKP…TAPMLWREDL (470 aa)). Catalysis depends on Y813, which acts as the O-(5'-phospho-DNA)-tyrosine intermediate. Positions 996 to 1005 (KLQTTISMTC) are interaction with DNA. Disordered stretches follow at residues 1107–1134 (TALE…VDPD), 1209–1249 (EELN…ISDD), 1261–1423 (KTRK…MDSD), and 1459–1547 (RQRR…SLSD). The segment covering 1109-1123 (LEDDDAQESEEEEPE) has biased composition (acidic residues). The span at 1124–1134 (PDPKGKPVDPD) shows a compositional bias: basic and acidic residues. Over residues 1216–1228 (KTSKAMAGKKNRK) the composition is skewed to basic residues. Composition is skewed to basic and acidic residues over residues 1238-1249 (NGRRVEPKISDD) and 1294-1315 (EKPE…DGLK). A compositionally biased stretch (low complexity) spans 1331–1344 (TFSGSSSGEMSASD). Positions 1373–1383 (DDSGSDSEPEL) are enriched in acidic residues. 2 stretches are compositionally biased toward basic and acidic residues: residues 1384–1394 (LDNKIDSDHEA) and 1459–1488 (RQRR…DEKK). A compositionally biased stretch (basic residues) spans 1513–1528 (KGKKKTAANPKKKAKK). Residues 1537 to 1547 (DFNISDSSLSD) are compositionally biased toward polar residues.

It belongs to the type II topoisomerase family. Homodimer. Mg(2+) serves as cofactor. The cofactor is Mn(2+). Requires Ca(2+) as cofactor.

Its subcellular location is the nucleus. It carries out the reaction ATP-dependent breakage, passage and rejoining of double-stranded DNA.. In terms of biological role, control of topological states of DNA by transient breakage and subsequent rejoining of DNA strands. Topoisomerase II makes double-strand breaks. This is DNA topoisomerase 2 (TOP2) from Bombyx mori (Silk moth).